The primary structure comprises 544 residues: Chaperonin GroEL (544 aa).

ATP is bound by residues Thr30 to Pro33, Lys51, Asp87 to Thr91, Gly415, and Asp495.

This sequence belongs to the chaperonin (HSP60) family. Forms a cylinder of 14 subunits composed of two heptameric rings stacked back-to-back. Interacts with the co-chaperonin GroES.

It is found in the cytoplasm. It carries out the reaction ATP + H2O + a folded polypeptide = ADP + phosphate + an unfolded polypeptide.. Together with its co-chaperonin GroES, plays an essential role in assisting protein folding. The GroEL-GroES system forms a nano-cage that allows encapsulation of the non-native substrate proteins and provides a physical environment optimized to promote and accelerate protein folding. The sequence is that of Chaperonin GroEL from Neisseria meningitidis serogroup A / serotype 4A (strain DSM 15465 / Z2491).